Here is a 679-residue protein sequence, read N- to C-terminus: Penicillin-binding protein PbpB (679 aa).

The interval 1-74 (MSRAAPRRAS…STRARRTRQV (74 aa)) is disordered. The Cytoplasmic portion of the chain corresponds to 1–90 (MSRAAPRRAS…GASFVFRHRT (90 aa)). Residues 42–54 (ARQAQEATKSRPA) show a composition bias toward polar residues. Residues 91–111 (GNAVILVLMLVAATQLFFLQV) traverse the membrane as a helical segment. The Extracellular segment spans residues 112-679 (SHAAGLRAQA…PGPPLVLQAT (568 aa)). S386 acts as the Acyl-ester intermediate in catalysis.

Belongs to the transpeptidase family. As to quaternary structure, interacts with Wag31. Cleaved by Rip1 in response to oxidative stress (H(2)O(2)), prevented by Wag31. Cleavage probably occurs near residues 102-103.

It localises to the cell membrane. It participates in cell wall biogenesis; peptidoglycan biosynthesis. In terms of biological role, synthesis of cross-linked peptidoglycan from the lipid intermediates. This is Penicillin-binding protein PbpB (pbpB) from Mycobacterium tuberculosis (strain ATCC 25618 / H37Rv).